We begin with the raw amino-acid sequence, 492 residues long: Propanoyl-CoA:succinate CoA transferase (492 aa).

Residue 260 to 264 coordinates CoA; it reads GVGNI. Residue Glu286 is the 5-glutamyl coenzyme A thioester intermediate of the active site. CoA is bound by residues Asn376 and Gly380.

Belongs to the acetyl-CoA hydrolase/transferase family.

The catalysed reaction is propanoyl-CoA + succinate = propanoate + succinyl-CoA. Functionally, catalyzes the transfer of coenzyme A from propionyl-CoA to succinate. Could be part of a pathway that converts succinate to propionate. This is Propanoyl-CoA:succinate CoA transferase from Escherichia coli (strain K12).